The following is a 242-amino-acid chain: Small ribosomal subunit protein eS6 (242 aa).

Positions 219–229 are enriched in basic and acidic residues; that stretch reads EKKSEKAEEKK. A disordered region spans residues 219–242; that stretch reads EKKSEKAEEKKRRASSLRTQSVQA. A phosphoserine mark is found at Ser233 and Ser234.

The protein belongs to the eukaryotic ribosomal protein eS6 family. Phosphorylated.

The chain is Small ribosomal subunit protein eS6 (RPS6) from Yarrowia lipolytica (strain CLIB 122 / E 150) (Yeast).